The sequence spans 57 residues: Ribulose bisphosphate carboxylase large chain (57 aa).

A propeptide spanning residues 1–2 (MS) is cleaved from the precursor. Pro3 carries the post-translational modification N-acetylproline. An N6,N6,N6-trimethyllysine modification is found at Lys14.

This sequence belongs to the RuBisCO large chain family. Type I subfamily. Heterohexadecamer of 8 large chains and 8 small chains.

Its subcellular location is the plastid. It localises to the chloroplast. The enzyme catalyses 2 (2R)-3-phosphoglycerate + 2 H(+) = D-ribulose 1,5-bisphosphate + CO2 + H2O. It catalyses the reaction D-ribulose 1,5-bisphosphate + O2 = 2-phosphoglycolate + (2R)-3-phosphoglycerate + 2 H(+). In terms of biological role, ruBisCO catalyzes two reactions: the carboxylation of D-ribulose 1,5-bisphosphate, the primary event in carbon dioxide fixation, as well as the oxidative fragmentation of the pentose substrate in the photorespiration process. Both reactions occur simultaneously and in competition at the same active site. The protein is Ribulose bisphosphate carboxylase large chain (rbcL) of Camellia sinensis (Tea plant).